We begin with the raw amino-acid sequence, 206 residues long: dCTP deaminase, dUMP-forming (206 aa).

Residues Arg-117–Arg-122, Asp-135, Thr-143–Glu-145, Gln-163, Tyr-177, Lys-184, and Gln-188 contribute to the dCTP site. Glu-145 functions as the Proton donor/acceptor in the catalytic mechanism.

Belongs to the dCTP deaminase family. Homotrimer.

The enzyme catalyses dCTP + 2 H2O = dUMP + NH4(+) + diphosphate. It participates in pyrimidine metabolism; dUMP biosynthesis; dUMP from dCTP: step 1/1. Functionally, bifunctional enzyme that catalyzes both the deamination of dCTP to dUTP and the hydrolysis of dUTP to dUMP without releasing the toxic dUTP intermediate. In Methanococcus maripaludis (strain C6 / ATCC BAA-1332), this protein is dCTP deaminase, dUMP-forming.